Reading from the N-terminus, the 348-residue chain is tRNA N6-adenosine threonylcarbamoyltransferase (348 aa).

His-115 and His-119 together coordinate Fe cation. Substrate is bound by residues 138-142 (LVSGG), Asp-171, Gly-184, and Asn-276. Fe cation is bound at residue Asp-304.

This sequence belongs to the KAE1 / TsaD family. It depends on Fe(2+) as a cofactor.

It localises to the cytoplasm. It catalyses the reaction L-threonylcarbamoyladenylate + adenosine(37) in tRNA = N(6)-L-threonylcarbamoyladenosine(37) in tRNA + AMP + H(+). In terms of biological role, required for the formation of a threonylcarbamoyl group on adenosine at position 37 (t(6)A37) in tRNAs that read codons beginning with adenine. Is involved in the transfer of the threonylcarbamoyl moiety of threonylcarbamoyl-AMP (TC-AMP) to the N6 group of A37, together with TsaE and TsaB. TsaD likely plays a direct catalytic role in this reaction. This chain is tRNA N6-adenosine threonylcarbamoyltransferase, found in Xylella fastidiosa (strain M23).